A 285-amino-acid chain; its full sequence is Nucleotide-binding protein FMG_1084 (285 aa).

Position 8–15 (8–15 (GMSGAGKS)) interacts with ATP. Residue 59–62 (DIRG) participates in GTP binding.

This sequence belongs to the RapZ-like family.

Displays ATPase and GTPase activities. The sequence is that of Nucleotide-binding protein FMG_1084 from Finegoldia magna (strain ATCC 29328 / DSM 20472 / WAL 2508) (Peptostreptococcus magnus).